The sequence spans 920 residues: Probable transport protein MmpL7 (920 aa).

The next 12 membrane-spanning stretches (helical) occupy residues 44 to 64 (LLVV…LTFT), 210 to 230 (ITAW…VLLL), 241 to 261 (AIVL…AAVV), 271 to 291 (VFSW…ATML), 311 to 331 (LPAF…LLLA), 344 to 364 (LGVF…IALA), 389 to 409 (SASA…IIGM), 761 to 781 (LIHD…LASM), 790 to 810 (AVGV…IALW), 822 to 842 (VPLV…VAGI), 864 to 884 (GAVA…VLVS), and 888 to 908 (FSVL…LITV).

Belongs to the resistance-nodulation-cell division (RND) (TC 2.A.6) family. MmpL subfamily.

The protein localises to the cell membrane. In Mycobacterium bovis (strain ATCC BAA-935 / AF2122/97), this protein is Probable transport protein MmpL7 (mmpL7).